The primary structure comprises 820 residues: Penicillin-binding protein 1A (820 aa).

Residues 1–120 (MNSDGRHHQS…PAGRLPQPRV (120 aa)) are disordered. The segment covering 41–53 (TDDRSAPHADSIE) has biased composition (basic and acidic residues). The chain crosses the membrane as a helical span at residues 139 to 159 (LTAAVVILLPMVTFTMAYLIV). The segment at 180 to 360 (GSEIAKIVPP…RWNWVLDGMV (181 aa)) is transglycosylase. The active-site Proton donor; for transglycosylase activity is E213. Residues 453-743 (AVVSIDPHNG…PSDIWKATMD (291 aa)) are transpeptidase. S487 functions as the Acyl-ester intermediate; for transpeptidase activity in the catalytic mechanism. Over residues 792 to 804 (ITIPIGPPTTITL) the composition is skewed to low complexity. The interval 792 to 820 (ITIPIGPPTTITLAPPPPAPPAATPTPPP) is disordered. Over residues 805–820 (APPPPAPPAATPTPPP) the composition is skewed to pro residues.

This sequence in the N-terminal section; belongs to the glycosyltransferase 51 family. The protein in the C-terminal section; belongs to the transpeptidase family. As to quaternary structure, interacts with RipA via its transpeptidase domain (residues 561-820).

It is found in the cell membrane. The enzyme catalyses [GlcNAc-(1-&gt;4)-Mur2Ac(oyl-L-Ala-gamma-D-Glu-L-Lys-D-Ala-D-Ala)](n)-di-trans,octa-cis-undecaprenyl diphosphate + beta-D-GlcNAc-(1-&gt;4)-Mur2Ac(oyl-L-Ala-gamma-D-Glu-L-Lys-D-Ala-D-Ala)-di-trans,octa-cis-undecaprenyl diphosphate = [GlcNAc-(1-&gt;4)-Mur2Ac(oyl-L-Ala-gamma-D-Glu-L-Lys-D-Ala-D-Ala)](n+1)-di-trans,octa-cis-undecaprenyl diphosphate + di-trans,octa-cis-undecaprenyl diphosphate + H(+). It catalyses the reaction Preferential cleavage: (Ac)2-L-Lys-D-Ala-|-D-Ala. Also transpeptidation of peptidyl-alanyl moieties that are N-acyl substituents of D-alanine.. Its pathway is cell wall biogenesis; peptidoglycan biosynthesis. Cell wall formation. Synthesis of cross-linked peptidoglycan from the lipid intermediates. The enzyme has a penicillin-insensitive transglycosylase N-terminal domain (formation of linear glycan strands) and a penicillin-sensitive transpeptidase C-terminal domain (cross-linking of the peptide subunits). Has little peptidoglycan hydrolytic activity; however it inhibits the synergistic peptidoglycan hydrolysis of RipA plus RpfB. The protein is Penicillin-binding protein 1A (ponA1) of Mycobacterium tuberculosis (strain ATCC 25618 / H37Rv).